A 392-amino-acid chain; its full sequence is Putative nicotinate phosphoribosyltransferase (392 aa).

Nicotinate contacts are provided by Tyr-21, Phe-138, and Thr-179. His-182 carries the post-translational modification Phosphohistidine. Arg-235 serves as a coordination point for nicotinate. Residues Ser-240, Gly-272, and Thr-293 each contribute to the 5-phospho-alpha-D-ribose 1-diphosphate site. Positions 330, 333, 348, and 350 each coordinate Zn(2+).

This sequence belongs to the NAPRTase family. Highly divergent. Homodimer. Forms a trimer of dimers in the crystal. In terms of processing, transiently phosphorylated on a His residue during the reaction cycle. Phosphorylation strongly increases the affinity for substrates and increases the rate of nicotinate D-ribonucleotide production. Dephosphorylation regenerates the low-affinity form of the enzyme, leading to product release.

It carries out the reaction nicotinate + 5-phospho-alpha-D-ribose 1-diphosphate + ATP + H2O = nicotinate beta-D-ribonucleotide + ADP + phosphate + diphosphate. It participates in cofactor biosynthesis; NAD(+) biosynthesis; nicotinate D-ribonucleotide from nicotinate: step 1/1. In terms of biological role, catalyzes the synthesis of beta-nicotinate D-ribonucleotide from nicotinate and 5-phospho-D-ribose 1-phosphate at the expense of ATP. The sequence is that of Putative nicotinate phosphoribosyltransferase from Thermoplasma acidophilum (strain ATCC 25905 / DSM 1728 / JCM 9062 / NBRC 15155 / AMRC-C165).